The following is a 1173-amino-acid chain: Thrombospondin-1 (1173 aa).

The N-terminal stretch at 1-18 is a signal peptide; sequence MKGIFLLLMLVMPQTHQA. The 203-residue stretch at 22–224 folds into the Laminin G-like domain; it reads GNDDNSVFDL…LQNVRFVFGT (203 aa). Residues 50-98 are heparin-binding; the sequence is HLVKGPDPSSPAYRIEDADLIPPLPEDKFQDLLDAIRADRGFILLATLR. N-linked (GlcNAc...) asparagine glycosylation is found at Asn155 and Asn158. Cys174 and Cys235 form a disulfide bridge. 2 N-linked (GlcNAc...) asparagine glycosylation sites follow: Asn250 and Asn363. Residues 319-376 enclose the VWFC domain; sequence GVCLHNGVLHKNRDEWTVDSCTECTCQNSATICRKVSCPLMPCTNATIPDGECCPRCW. TSP type-1 domains lie at 382 to 432, 438 to 493, and 495 to 550; these read DDDW…QDCD, DGGW…DPCP, and NGQW…QDCP. Intrachain disulfides connect Cys394-Cys426, Cys398-Cys431, Cys409-Cys416, Cys450-Cys487, Cys454-Cys492, Cys465-Cys477, Cys507-Cys544, Cys511-Cys549, Cys522-Cys534, Cys554-Cys565, Cys559-Cys575, Cys578-Cys589, Cys595-Cys611, Cys602-Cys620, Cys623-Cys647, Cys653-Cys666, Cys660-Cys679, and Cys681-Cys692. The 41-residue stretch at 550-590 folds into the EGF-like 1 domain; it reads PIDGCLSNPCFAGVKCTSFIDGSWKCGSCPPGYRGNGITCK. In terms of domain architecture, EGF-like 2 spans 649–693; sequence PRNPCADGTHDCHKNARCIYLGHYSDPMFRCECRPGYAGNGIICG. TSP type-3 repeat units follow at residues 694 to 729, 730 to 765, 766 to 788, 789 to 824, 825 to 847, 848 to 885, 886 to 921, and 922 to 957; these read EDTDLDGWPNENLTCVDNATYHCLKDNCPNLPNSGQ, EDYDKDGMGDACDKDDDNDGILDDRDNCQFVYNPAQ, YDYDRDDVGDRCDNCPYNHNPDQ, ADTDRNGEGDACSVDIDGDGILNERDNCAYVYNVDQ, KDTDKDGVGDQCDNCPLEHNPEQ, TDSDSDLIGDKCDNNQDIDEDGHQNNLDNCPYIPNANQ, ADHDKDGKGDACDHDDDNDGVPDDKDNCRLVPNPDQ, and TDTNGDGRGDACQYDFDDDSIPDAEDVCPENVEIST. N-linked (GlcNAc...) asparagine glycans are attached at residues Asn705 and Asn711. 9 disulfides stabilise this stretch: Cys708–Cys716, Cys721–Cys741, Cys757–Cys777, Cys780–Cys800, Cys816–Cys836, Cys839–Cys859, Cys877–Cys897, Cys913–Cys933, and Cys949–Cys1170. The tract at residues 838–935 is disordered; sequence NCPLEHNPEQ…GDGRGDACQY (98 aa). The span at 886 to 897 shows a compositional bias: basic and acidic residues; the sequence is ADHDKDGKGDAC. The short motif at 929 to 931 is the Cell attachment site element; sequence RGD. One can recognise a TSP C-terminal domain in the interval 961-1173; it reads RKFQMVPLDP…SDLKYECRDS (213 aa). The N-linked (GlcNAc...) asparagine glycan is linked to Asn1070.

The protein belongs to the thrombospondin family. In terms of assembly, homotrimer; disulfide-linked.

The protein resides in the secreted. Its subcellular location is the cell surface. It localises to the extracellular space. It is found in the extracellular matrix. The protein localises to the endoplasmic reticulum. The protein resides in the sarcoplasmic reticulum. In terms of biological role, adhesive glycoprotein that mediates cell-to-cell and cell-to-matrix interactions. Can bind to fibrinogen, fibronectin, laminin, type V collagen and integrins alpha-V/beta-1, alpha-V/beta-3 and alpha-IIb/beta-3. May play a role in ER stress response. The sequence is that of Thrombospondin-1 (thbs1) from Xenopus laevis (African clawed frog).